We begin with the raw amino-acid sequence, 317 residues long: Serpentine receptor class delta-47 (317 aa).

The next 7 membrane-spanning stretches (helical) occupy residues 8–28, 42–62, 89–109, 128–148, 185–205, 239–259, and 270–290; these read IFYP…FVVV, VLFC…LLQL, CLYF…LLTI, IVII…IYSV, YLII…GLYT, ACLP…VIGT, and ISVL…YSVA.

It belongs to the nematode receptor-like protein srd family.

Its subcellular location is the membrane. The protein is Serpentine receptor class delta-47 (srd-47) of Caenorhabditis elegans.